We begin with the raw amino-acid sequence, 134 residues long: MDEKTLAKMIEAVNKHMPEKTRSLAEMLKEKDPTIRAKDGNEYYIEKRELEFIAQHVDELDWPRFRIPVILEMNDIGGERVIYVRDKLHAEFIKRAFGFDRVLNGILTLYMYELPQIRRKLRTASQVIFRISLK.

It belongs to the UPF0216 family.

The chain is UPF0216 protein AF_0460 from Archaeoglobus fulgidus (strain ATCC 49558 / DSM 4304 / JCM 9628 / NBRC 100126 / VC-16).